The sequence spans 572 residues: Proline--tRNA ligase (572 aa).

This sequence belongs to the class-II aminoacyl-tRNA synthetase family. ProS type 1 subfamily. Homodimer.

The protein resides in the cytoplasm. The catalysed reaction is tRNA(Pro) + L-proline + ATP = L-prolyl-tRNA(Pro) + AMP + diphosphate. Functionally, catalyzes the attachment of proline to tRNA(Pro) in a two-step reaction: proline is first activated by ATP to form Pro-AMP and then transferred to the acceptor end of tRNA(Pro). As ProRS can inadvertently accommodate and process non-cognate amino acids such as alanine and cysteine, to avoid such errors it has two additional distinct editing activities against alanine. One activity is designated as 'pretransfer' editing and involves the tRNA(Pro)-independent hydrolysis of activated Ala-AMP. The other activity is designated 'posttransfer' editing and involves deacylation of mischarged Ala-tRNA(Pro). The misacylated Cys-tRNA(Pro) is not edited by ProRS. This Photorhabdus laumondii subsp. laumondii (strain DSM 15139 / CIP 105565 / TT01) (Photorhabdus luminescens subsp. laumondii) protein is Proline--tRNA ligase.